The sequence spans 260 residues: Taurine import ATP-binding protein TauB (260 aa).

An ABC transporter domain is found at 6-235 (AQQVSVVYAS…RYAHGEPMRS (230 aa)). 40-47 (GASGCGKS) provides a ligand contact to ATP.

It belongs to the ABC transporter superfamily. Taurine importer (TC 3.A.1.17.1) family. As to quaternary structure, the complex is composed of two ATP-binding proteins (TauB), two transmembrane proteins (TauC) and a solute-binding protein (TauA).

The protein resides in the cell inner membrane. The catalysed reaction is taurine(out) + ATP + H2O = taurine(in) + ADP + phosphate + H(+). Its function is as follows. Part of the ABC transporter complex TauABC involved in taurine import. Responsible for energy coupling to the transport system. The chain is Taurine import ATP-binding protein TauB from Burkholderia pseudomallei (strain 1710b).